The following is a 502-amino-acid chain: Maturase K (502 aa).

The protein belongs to the intron maturase 2 family. MatK subfamily.

The protein localises to the plastid. The protein resides in the chloroplast. Its function is as follows. Usually encoded in the trnK tRNA gene intron. Probably assists in splicing its own and other chloroplast group II introns. This chain is Maturase K, found in Brassica campestris (Field mustard).